The following is a 393-amino-acid chain: Seven-bladed beta-propeller protein Rv1057 (393 aa).

The tract at residues Asp208–Ala230 is disordered. The segment covering Ser214–Lys224 has biased composition (basic residues).

May play an important role in host-pathogen interactions and in ESAT-6 secretion. The sequence is that of Seven-bladed beta-propeller protein Rv1057 from Mycobacterium tuberculosis (strain ATCC 25618 / H37Rv).